The sequence spans 232 residues: 5'-methylthioadenosine/S-adenosylhomocysteine nucleosidase (232 aa).

The active-site Proton acceptor is Glu-12. Residues Gly-78, Ile-152, and 173–174 (ME) contribute to the substrate site. Asp-197 (proton donor) is an active-site residue.

It belongs to the PNP/UDP phosphorylase family. MtnN subfamily. As to quaternary structure, homodimer.

The catalysed reaction is S-adenosyl-L-homocysteine + H2O = S-(5-deoxy-D-ribos-5-yl)-L-homocysteine + adenine. The enzyme catalyses S-methyl-5'-thioadenosine + H2O = 5-(methylsulfanyl)-D-ribose + adenine. It carries out the reaction 5'-deoxyadenosine + H2O = 5-deoxy-D-ribose + adenine. It participates in amino-acid biosynthesis; L-methionine biosynthesis via salvage pathway; S-methyl-5-thio-alpha-D-ribose 1-phosphate from S-methyl-5'-thioadenosine (hydrolase route): step 1/2. Functionally, catalyzes the irreversible cleavage of the glycosidic bond in both 5'-methylthioadenosine (MTA) and S-adenosylhomocysteine (SAH/AdoHcy) to adenine and the corresponding thioribose, 5'-methylthioribose and S-ribosylhomocysteine, respectively. Also cleaves 5'-deoxyadenosine, a toxic by-product of radical S-adenosylmethionine (SAM) enzymes, into 5-deoxyribose and adenine. Thus, is required for in vivo function of the radical SAM enzymes biotin synthase and lipoic acid synthase, that are inhibited by 5'-deoxyadenosine accumulation. This is 5'-methylthioadenosine/S-adenosylhomocysteine nucleosidase from Klebsiella pneumoniae subsp. pneumoniae (strain ATCC 700721 / MGH 78578).